We begin with the raw amino-acid sequence, 427 residues long: Septin-6 (427 aa).

Residue A2 is modified to N-acetylalanine. S27 is modified (phosphoserine). The Septin-type G domain occupies 39–305; sequence QGFCFNILCV…ELYRRCKLEE (267 aa). The segment at 49–56 is G1 motif; sequence GETGLGKS. Residues 49 to 56, G104, 185 to 193, G239, and R254 contribute to the GTP site; these read GETGLGKS and KSDAISKSE. The tract at residues 101–104 is G3 motif; the sequence is STVG. Positions 184–187 are G4 motif; sequence AKSD. Residues 321–416 are a coiled coil; the sequence is QETYEAKRNE…QSQGSQAGGS (96 aa). K367 bears the N6-acetyllysine mark. The interval 405-427 is disordered; it reads LLQSQGSQAGGSQTLKRDKEKKN. Over residues 407–417 the composition is skewed to low complexity; it reads QSQGSQAGGSQ. Residue S416 is modified to Phosphoserine. T418 carries the post-translational modification Phosphothreonine.

This sequence belongs to the TRAFAC class TrmE-Era-EngA-EngB-Septin-like GTPase superfamily. Septin GTPase family. As to quaternary structure, septins polymerize into heterooligomeric protein complexes that form filaments, and associate with cellular membranes, actin filaments and microtubules. GTPase activity is required for filament formation. Filaments are assembled from asymmetrical heterotrimers, composed of SEPTIN2, SEPTIN6 and SEPTIN7 that associate head-to-head to form a hexameric unit. Within the trimer, directly interacts with SEPTIN2 and SEPTIN7. Also interacts with SEPTIN9 and SEPTIN12. Interaction with SEPTIN12 alters filament structure. Component of a septin core octameric complex consisting of SEPTIN12, SEPTIN7, SEPTIN6 and SEPTIN2 or SEPTIN4 in the order 12-7-6-2-2-6-7-12 or 12-7-6-4-4-6-7-12 and located in the sperm annulus. Interacts with SOCS7. Interacts with HNRNPA1.

Its subcellular location is the cytoplasm. The protein localises to the cytoskeleton. It localises to the spindle. It is found in the chromosome. The protein resides in the centromere. Its subcellular location is the kinetochore. The protein localises to the cleavage furrow. It localises to the midbody. It is found in the cell projection. The protein resides in the cilium. Its subcellular location is the flagellum. Its function is as follows. Filament-forming cytoskeletal GTPase. Required for normal organization of the actin cytoskeleton. Involved in cytokinesis. Forms a filamentous structure with SEPTIN12, SEPTIN6, SEPTIN2 and probably SEPTIN4 at the sperm annulus which is required for the structural integrity and motility of the sperm tail during postmeiotic differentiation. This chain is Septin-6, found in Bos taurus (Bovine).